Consider the following 361-residue polypeptide: UDP-3-O-acylglucosamine N-acyltransferase (361 aa).

His253 acts as the Proton acceptor in catalysis.

The protein belongs to the transferase hexapeptide repeat family. LpxD subfamily. Homotrimer.

It carries out the reaction a UDP-3-O-[(3R)-3-hydroxyacyl]-alpha-D-glucosamine + a (3R)-hydroxyacyl-[ACP] = a UDP-2-N,3-O-bis[(3R)-3-hydroxyacyl]-alpha-D-glucosamine + holo-[ACP] + H(+). It participates in bacterial outer membrane biogenesis; LPS lipid A biosynthesis. In terms of biological role, catalyzes the N-acylation of UDP-3-O-acylglucosamine using 3-hydroxyacyl-ACP as the acyl donor. Is involved in the biosynthesis of lipid A, a phosphorylated glycolipid that anchors the lipopolysaccharide to the outer membrane of the cell. The polypeptide is UDP-3-O-acylglucosamine N-acyltransferase (Burkholderia pseudomallei (strain 1710b)).